The chain runs to 357 residues: Aminomethyltransferase (357 aa).

It belongs to the GcvT family. As to quaternary structure, the glycine cleavage system is composed of four proteins: P, T, L and H.

It catalyses the reaction N(6)-[(R)-S(8)-aminomethyldihydrolipoyl]-L-lysyl-[protein] + (6S)-5,6,7,8-tetrahydrofolate = N(6)-[(R)-dihydrolipoyl]-L-lysyl-[protein] + (6R)-5,10-methylene-5,6,7,8-tetrahydrofolate + NH4(+). In terms of biological role, the glycine cleavage system catalyzes the degradation of glycine. The chain is Aminomethyltransferase from Deinococcus deserti (strain DSM 17065 / CIP 109153 / LMG 22923 / VCD115).